The chain runs to 301 residues: CRISPR-associated endonuclease Cas1 (301 aa).

3 residues coordinate Mn(2+): E133, H200, and D213.

The protein belongs to the CRISPR-associated endonuclease Cas1 family. Homodimer, forms a heterotetramer with a Cas2 homodimer. Mg(2+) is required as a cofactor. Mn(2+) serves as cofactor.

In terms of biological role, CRISPR (clustered regularly interspaced short palindromic repeat), is an adaptive immune system that provides protection against mobile genetic elements (viruses, transposable elements and conjugative plasmids). CRISPR clusters contain spacers, sequences complementary to antecedent mobile elements, and target invading nucleic acids. CRISPR clusters are transcribed and processed into CRISPR RNA (crRNA). Acts as a dsDNA endonuclease. Involved in the integration of spacer DNA into the CRISPR cassette. This Clostridium sp. (strain SY8519) protein is CRISPR-associated endonuclease Cas1.